Consider the following 277-residue polypeptide: NH(3)-dependent NAD(+) synthetase (277 aa).

Residue 46–53 coordinates ATP; the sequence is GISGGQDS. D52 is a binding site for Mg(2+). R141 contributes to the deamido-NAD(+) binding site. An ATP-binding site is contributed by T161. E166 lines the Mg(2+) pocket. Deamido-NAD(+) contacts are provided by K174 and D181. ATP contacts are provided by K190 and T212. 262–263 contacts deamido-NAD(+); it reads HK.

It belongs to the NAD synthetase family. Homodimer.

It catalyses the reaction deamido-NAD(+) + NH4(+) + ATP = AMP + diphosphate + NAD(+) + H(+). The protein operates within cofactor biosynthesis; NAD(+) biosynthesis; NAD(+) from deamido-NAD(+) (ammonia route): step 1/1. Its function is as follows. Catalyzes the ATP-dependent amidation of deamido-NAD to form NAD. Uses ammonia as a nitrogen source. The chain is NH(3)-dependent NAD(+) synthetase from Corynebacterium efficiens (strain DSM 44549 / YS-314 / AJ 12310 / JCM 11189 / NBRC 100395).